A 185-amino-acid chain; its full sequence is Threonylcarbamoyl-AMP synthase (185 aa).

The YrdC-like domain occupies 1 to 185 (MKNLNQVVDA…AKTGNTLRQG (185 aa)).

It belongs to the SUA5 family. TsaC subfamily.

It localises to the cytoplasm. It carries out the reaction L-threonine + hydrogencarbonate + ATP = L-threonylcarbamoyladenylate + diphosphate + H2O. Its function is as follows. Required for the formation of a threonylcarbamoyl group on adenosine at position 37 (t(6)A37) in tRNAs that read codons beginning with adenine. Catalyzes the conversion of L-threonine, HCO(3)(-)/CO(2) and ATP to give threonylcarbamoyl-AMP (TC-AMP) as the acyladenylate intermediate, with the release of diphosphate. The polypeptide is Threonylcarbamoyl-AMP synthase (Aliivibrio fischeri (strain ATCC 700601 / ES114) (Vibrio fischeri)).